Reading from the N-terminus, the 215-residue chain is Probable phosphoglycerate mutase GpmB (215 aa).

Substrate contacts are provided by residues 8–15 (RHGETQWN), 21–22 (QG), Arg58, Lys60, 82–85 (ELDM), 104–105 (RR), and 151–152 (GI). The active-site Tele-phosphohistidine intermediate is the His9. Catalysis depends on Glu82, which acts as the Proton donor/acceptor.

Belongs to the phosphoglycerate mutase family. GpmB subfamily.

It catalyses the reaction (2R)-2-phosphoglycerate = (2R)-3-phosphoglycerate. The protein operates within carbohydrate degradation; glycolysis; pyruvate from D-glyceraldehyde 3-phosphate: step 3/5. The chain is Probable phosphoglycerate mutase GpmB from Salmonella typhi.